Here is a 370-residue protein sequence, read N- to C-terminus: Phospho-N-acetylmuramoyl-pentapeptide-transferase (370 aa).

10 helical membrane-spanning segments follow: residues 3 to 23, 54 to 74, 79 to 99, 118 to 138, 161 to 181, 197 to 217, 238 to 258, 262 to 282, 290 to 310, and 341 to 361; these read QIIIAGAVSFLVAIFTTPVLI, GLAILAGILVAYVVAGLYGLL, AFTASGLLVLGLTLGLGAVGF, AKLISQLVLALLFGFLVLRFP, LAVGGTVIGTIVFLIFMYILI, LAAGVTAIVMGSYSLMTFWQF, LAVLAAAGLGGCLGFLWWNAA, IFMGDTGSLALGGLVAGISVT, IIIGALFVIETVSVVIQIVVF, and FWLLAAMAAMAGVAIFYGDWL.

Belongs to the glycosyltransferase 4 family. MraY subfamily. Requires Mg(2+) as cofactor.

Its subcellular location is the cell membrane. The catalysed reaction is UDP-N-acetyl-alpha-D-muramoyl-L-alanyl-gamma-D-glutamyl-meso-2,6-diaminopimeloyl-D-alanyl-D-alanine + di-trans,octa-cis-undecaprenyl phosphate = di-trans,octa-cis-undecaprenyl diphospho-N-acetyl-alpha-D-muramoyl-L-alanyl-D-glutamyl-meso-2,6-diaminopimeloyl-D-alanyl-D-alanine + UMP. The protein operates within cell wall biogenesis; peptidoglycan biosynthesis. Functionally, catalyzes the initial step of the lipid cycle reactions in the biosynthesis of the cell wall peptidoglycan: transfers peptidoglycan precursor phospho-MurNAc-pentapeptide from UDP-MurNAc-pentapeptide onto the lipid carrier undecaprenyl phosphate, yielding undecaprenyl-pyrophosphoryl-MurNAc-pentapeptide, known as lipid I. This Corynebacterium aurimucosum (strain ATCC 700975 / DSM 44827 / CIP 107346 / CN-1) (Corynebacterium nigricans) protein is Phospho-N-acetylmuramoyl-pentapeptide-transferase.